A 319-amino-acid chain; its full sequence is Probable NAD(P)H-dependent D-xylose reductase xyl1 (319 aa).

Catalysis depends on tyrosine 50, which acts as the Proton donor. Residue histidine 112 participates in substrate binding. NAD(+)-binding positions include 166–167, 215–224, and 271–281; these read SN, SSFGPLSFLE, and KSNNPARLLQN.

This sequence belongs to the aldo/keto reductase family.

The catalysed reaction is xylitol + NAD(+) = D-xylose + NADH + H(+). It carries out the reaction xylitol + NADP(+) = D-xylose + NADPH + H(+). Its pathway is carbohydrate metabolism; D-xylose degradation. Functionally, catalyzes the initial reaction in the xylose utilization pathway by reducing D-xylose into xylitol. Xylose is a major component of hemicelluloses such as xylan. Most fungi utilize D-xylose via three enzymatic reactions, xylose reductase (XR), xylitol dehydrogenase (XDH), and xylulokinase, to form xylulose 5-phosphate, which enters pentose phosphate pathway. The chain is Probable NAD(P)H-dependent D-xylose reductase xyl1 (xyl1) from Emericella nidulans (strain FGSC A4 / ATCC 38163 / CBS 112.46 / NRRL 194 / M139) (Aspergillus nidulans).